We begin with the raw amino-acid sequence, 449 residues long: MVDASQYLSVTALTQYLKRKFDADPYLAKVYLTGEISNYRKRVGNQYFSLKDDHAKIGALMFRNAFSKVQFDLEEGMKVLVVGRVSLYEPSGEYRLIVEHLEPDGVGALYQAFEQLKKKLAAEGLFDRNQRPLPLFPKRVAVVTSPSGAVIQDIMTTVARRYPILQLTLFPAVVQGDQAADSLVKRLNQIKTIGGFDAVIIGRGGGSIEDLWPFNEEKVARALVDMPMPVVSSVGHETDTTITDFIADRRAATPTAAAEIVTPVTLIDALNRISEDRVRLVNAMHNRLKNAAIRVQRSAQSVVLTQPDRLYDQYVQRVDQFQQRLQQSMHNRLREADHRLAMAASQLDGRQLFIRLVNLQRQVTGDRHRLDQAMRGLVKTKRQAFASAVSGLDHLSPLKILGRGFAYVTDEQGQMLKSLSDYELDQDIHIHVADGQVGAHVTTKEKTHG.

The protein belongs to the XseA family. In terms of assembly, heterooligomer composed of large and small subunits.

It localises to the cytoplasm. The catalysed reaction is Exonucleolytic cleavage in either 5'- to 3'- or 3'- to 5'-direction to yield nucleoside 5'-phosphates.. Bidirectionally degrades single-stranded DNA into large acid-insoluble oligonucleotides, which are then degraded further into small acid-soluble oligonucleotides. The sequence is that of Exodeoxyribonuclease 7 large subunit from Lacticaseibacillus casei (strain BL23) (Lactobacillus casei).